Here is a 472-residue protein sequence, read N- to C-terminus: MSKNPIHIIGGGLAGSEAAWQAAQAGVPVVLHEMRPVRGTDAHKTDGLAELVCSNSFRSDDAENNAVGLLHAEMRLAGSLIMSAGDANQVPAGGALAVDRDGFSDAVTKKLEAHPLISIQREEVSGLPPADWDQAIIATGPLTAPSLARSIAEATGADALAFFDAIAPIIHFDTIDMDTCWFQSRYDKVGPGGTGKDYINCPMDKDQYLAFVQALIDGQKTEFKQWEGTPYFDGCLPIEIMAERGVETLRYGPMKPMGLTNAHNPMVKAYAVVQLRQDNALGTLYNMVGFQTKLKHAEQVRVFRTIPGLENADFARLGGLHRNTYINSPTLLDQSLQLKSRPGLRFAGQITGCEGYVESAAIGLLAGRFAAAERLGQAPSLPPLTTAFGALLNHITGGHIVSDDEPGKRSFQPMNVNFGLFPPVEAVKIEGKRLRGKDKTVAKRHAITSRALGDCRQWLGLPAPTETAEAAE.

Residue 10-15 (GGGLAG) participates in FAD binding.

The protein belongs to the MnmG family. TrmFO subfamily. FAD serves as cofactor.

Its subcellular location is the cytoplasm. It carries out the reaction uridine(54) in tRNA + (6R)-5,10-methylene-5,6,7,8-tetrahydrofolate + NADH + H(+) = 5-methyluridine(54) in tRNA + (6S)-5,6,7,8-tetrahydrofolate + NAD(+). The catalysed reaction is uridine(54) in tRNA + (6R)-5,10-methylene-5,6,7,8-tetrahydrofolate + NADPH + H(+) = 5-methyluridine(54) in tRNA + (6S)-5,6,7,8-tetrahydrofolate + NADP(+). Catalyzes the folate-dependent formation of 5-methyl-uridine at position 54 (M-5-U54) in all tRNAs. This chain is Methylenetetrahydrofolate--tRNA-(uracil-5-)-methyltransferase TrmFO, found in Mesorhizobium japonicum (strain LMG 29417 / CECT 9101 / MAFF 303099) (Mesorhizobium loti (strain MAFF 303099)).